The following is a 120-amino-acid chain: Synaptobrevin (120 aa).

The segment at 1-38 (MSAPPSGPAPDAQGGAPGQPTGPPGAPPNTTSNRRLQQ) is disordered. Residues 1–98 (MSAPPSGPAP…KRKYWWKNCK (98 aa)) lie on the Cytoplasmic side of the membrane. Polar residues predominate over residues 29–38 (NTTSNRRLQQ). The region spanning 35–95 (RLQQTQAQVE…AKLKRKYWWK (61 aa)) is the v-SNARE coiled-coil homology domain. Residues 99–118 (MMIMLGGIGAIIVIVIIIYF) traverse the membrane as a helical; Anchor for type IV membrane protein segment. Topologically, residues 119–120 (FT) are vesicular.

Belongs to the synaptobrevin family. Nervous system specific.

It is found in the cytoplasmic vesicle. The protein localises to the secretory vesicle. It localises to the synaptic vesicle membrane. Its subcellular location is the synapse. The protein resides in the synaptosome. In terms of biological role, this protein may play a role in packaging, transport or release of neurotransmitters. This chain is Synaptobrevin, found in Tetronarce californica (Pacific electric ray).